The chain runs to 588 residues: Secreted triacylglycerol lipase LIP1 (588 aa).

An N-terminal signal peptide occupies residues 1–20; that stretch reads MRFSGFVSGLGLGLLTAVSA. Ser-258 functions as the Acyl-ester intermediate in the catalytic mechanism. Asn-400 is a glycosylation site (N-linked (GlcNAc...) asparagine).

It belongs to the type-B carboxylesterase/lipase family.

It is found in the secreted. It catalyses the reaction a triacylglycerol + H2O = a diacylglycerol + a fatty acid + H(+). Its function is as follows. Secreted acylglycerol lipase required for efficient utilization of saturated triglyceride lipids. Is not involved in virulence. The protein is Secreted triacylglycerol lipase LIP1 of Gibberella zeae (strain ATCC MYA-4620 / CBS 123657 / FGSC 9075 / NRRL 31084 / PH-1) (Wheat head blight fungus).